Consider the following 545-residue polypeptide: CTP synthase (545 aa).

An amidoligase domain region spans residues 1–266 (MTTRYIFVTG…DELVVKRFGI (266 aa)). Residue S14 coordinates CTP. S14 provides a ligand contact to UTP. Residues 15 to 20 (SLGKGI) and D72 each bind ATP. Mg(2+) contacts are provided by D72 and E140. CTP is bound by residues 147 to 149 (DIE), 187 to 192 (KTKPTQ), and K223. Residues 187-192 (KTKPTQ) and K223 contribute to the UTP site. 239-241 (KDV) provides a ligand contact to ATP. In terms of domain architecture, Glutamine amidotransferase type-1 spans 291 to 542 (TIGMVGKYIE…VAAATAYQKR (252 aa)). G352 contacts L-glutamine. C379 serves as the catalytic Nucleophile; for glutamine hydrolysis. L-glutamine is bound by residues 380–383 (LGLQ), E403, and R470. Residues H515 and E517 contribute to the active site.

Belongs to the CTP synthase family. Homotetramer.

It catalyses the reaction UTP + L-glutamine + ATP + H2O = CTP + L-glutamate + ADP + phosphate + 2 H(+). The catalysed reaction is L-glutamine + H2O = L-glutamate + NH4(+). It carries out the reaction UTP + NH4(+) + ATP = CTP + ADP + phosphate + 2 H(+). Its pathway is pyrimidine metabolism; CTP biosynthesis via de novo pathway; CTP from UDP: step 2/2. With respect to regulation, allosterically activated by GTP, when glutamine is the substrate; GTP has no effect on the reaction when ammonia is the substrate. The allosteric effector GTP functions by stabilizing the protein conformation that binds the tetrahedral intermediate(s) formed during glutamine hydrolysis. Inhibited by the product CTP, via allosteric rather than competitive inhibition. Catalyzes the ATP-dependent amination of UTP to CTP with either L-glutamine or ammonia as the source of nitrogen. Regulates intracellular CTP levels through interactions with the four ribonucleotide triphosphates. This chain is CTP synthase, found in Shewanella sediminis (strain HAW-EB3).